The following is a 104-amino-acid chain: Circadian clock oscillator protein KaiB (104 aa).

It belongs to the KaiB family. As to quaternary structure, the KaiABC complex composition changes during the circadian cycle to control KaiC phosphorylation. Complexes KaiC(6), KaiA(2-4):KaiC(6), KaiB(6):KaiC(6) and KaiC(6):KaiB(6):KaiA(12) are among the most important forms, many form cooperatively. Undergoes a major conformational rearrangment; in the free state forms homotetramers as a dimer of dimers. When bound to the CI domain of KaiC switches to a monomeric thioredoxin-fold (KaiB(fs)). KaiB(fs) binds CikA, leading it to dephosphorylate phospho-RpaA.

Functionally, key component of the KaiABC oscillator complex, which constitutes the main circadian regulator in cyanobacteria. Complex composition changes during the circadian cycle to control KaiC phosphorylation. KaiA stimulates KaiC autophosphorylation, while KaiB sequesters KaiA, leading to KaiC autodephosphorylation. Phospho-Ser-431 KaiC accumulation triggers binding of KaiB to form the KaiB(6):KaiC(6) complex, leading to changes in output regulators CikA and SasA. KaiB switches to a thioredoxin-like fold (KaiB(fs)) when bound to KaiC. KaiB(6):KaiC(6) formation exposes a site for KaiA binding that sequesters KaiA from KaiC, making the KaiC(6):KaiB(6):KaiA(12) complex that results in KaiC autodephosphorylation. A metamorphic protein which reversibly switches between an inactive tetrameric fold and a rare, thioredoxin-like monomeric fold (KaiB(fs)). KaiB(fs) binds phospho-KaiC, KaiA and CikA. KaiA and CikA compete for binding to KaiB(fs), and KaiB(fs) and SasA compete for binding to KaiC, thus the clock oscillator and output signal pathway are tightly coupled. The chain is Circadian clock oscillator protein KaiB from Trichodesmium erythraeum (strain IMS101).